Reading from the N-terminus, the 374-residue chain is NAD-capped RNA hydrolase ndx-9 (374 aa).

Positions 181, 184, 199, and 202 each coordinate Zn(2+). Residues Tyr207, 243–245, Glu259, Glu263, and Glu307 each bind substrate; that span reads AGF. A Nudix hydrolase domain is found at 208–336; it reads PTFSPVSITL…LADPLLKNLP (129 aa). Positions 243, 259, 263, and 307 each coordinate Mg(2+). The Nudix box motif lies at 244 to 265; the sequence is GFAHSGESMAECARREIAEEVG. Positions 367–369 match the Microbody targeting signal motif; that stretch reads LEN.

This sequence belongs to the Nudix hydrolase family. NudC subfamily. In terms of assembly, homodimer. It depends on Mg(2+) as a cofactor. Mn(2+) is required as a cofactor. Zn(2+) serves as cofactor.

It catalyses the reaction a 5'-end NAD(+)-phospho-ribonucleoside in mRNA + H2O = a 5'-end phospho-adenosine-phospho-ribonucleoside in mRNA + beta-nicotinamide D-ribonucleotide + 2 H(+). The enzyme catalyses NAD(+) + H2O = beta-nicotinamide D-ribonucleotide + AMP + 2 H(+). It carries out the reaction NADH + H2O = reduced beta-nicotinamide D-ribonucleotide + AMP + 2 H(+). In terms of biological role, mRNA decapping enzyme that specifically removes the nicotinamide adenine dinucleotide (NAD) cap from a subset of mRNAs by hydrolyzing the diphosphate linkage to produce nicotinamide mononucleotide (NMN) and 5' monophosphate mRNA. The NAD-cap is present at the 5'-end of some RNAs; in contrast to the canonical N7 methylguanosine (m7G) cap, the NAD cap promotes mRNA decay. Mediates the hydrolysis of some nucleoside diphosphate derivatives. The protein is NAD-capped RNA hydrolase ndx-9 (ndx-9) of Caenorhabditis elegans.